A 105-amino-acid polypeptide reads, in one-letter code: Diuretic hormone class 2 (105 aa).

The N-terminal stretch at 1–23 (MTVLCTLMAFVMVVAISSLTVDA) is a signal peptide. A propeptide spanning residues 24–63 (IPHSHESYWDQQDDIDRDEFLELLSRLSRTVMNRPEMENS) is cleaved from the precursor. Proline 96 bears the Proline amide mark. Positions 101 to 105 (RSEQA) are excised as a propeptide.

In terms of tissue distribution, expressed in central brain, antennal lobes, retrocerebral complex and gnathal, thoracic and abdominal ganglia but not in optical lobes (at protein level).

It localises to the secreted. Its function is as follows. Regulation of fluid secretion. Stimulates Malpighian tubules fluid secretion. This Camponotus floridanus (Florida carpenter ant) protein is Diuretic hormone class 2.